Reading from the N-terminus, the 225-residue chain is 7-cyano-7-deazaguanine synthase (225 aa).

Residue valine 10–isoleucine 20 participates in ATP binding. Positions 189, 199, 202, and 205 each coordinate Zn(2+).

The protein belongs to the QueC family. Requires Zn(2+) as cofactor.

The catalysed reaction is 7-carboxy-7-deazaguanine + NH4(+) + ATP = 7-cyano-7-deazaguanine + ADP + phosphate + H2O + H(+). The protein operates within purine metabolism; 7-cyano-7-deazaguanine biosynthesis. Functionally, catalyzes the ATP-dependent conversion of 7-carboxy-7-deazaguanine (CDG) to 7-cyano-7-deazaguanine (preQ(0)). This is 7-cyano-7-deazaguanine synthase from Cellvibrio japonicus (strain Ueda107) (Pseudomonas fluorescens subsp. cellulosa).